The chain runs to 699 residues: Elongation factor G 1 (699 aa).

Residues glutamate 8 to serine 290 enclose the tr-type G domain. Residues alanine 17–threonine 24, aspartate 88–histidine 92, and asparagine 142–aspartate 145 contribute to the GTP site.

It belongs to the TRAFAC class translation factor GTPase superfamily. Classic translation factor GTPase family. EF-G/EF-2 subfamily.

It is found in the cytoplasm. Its function is as follows. Catalyzes the GTP-dependent ribosomal translocation step during translation elongation. During this step, the ribosome changes from the pre-translocational (PRE) to the post-translocational (POST) state as the newly formed A-site-bound peptidyl-tRNA and P-site-bound deacylated tRNA move to the P and E sites, respectively. Catalyzes the coordinated movement of the two tRNA molecules, the mRNA and conformational changes in the ribosome. This chain is Elongation factor G 1, found in Vibrio parahaemolyticus serotype O3:K6 (strain RIMD 2210633).